Here is a 378-residue protein sequence, read N- to C-terminus: Putative zinc finger protein C09F5.3 (378 aa).

A compositionally biased stretch (basic residues) spans 1-14; that stretch reads MRKTEKMKRPHNSS. Disordered stretches follow at residues 1-36 and 61-80; these read MRKT…SKSI and TLSE…NSAP. Composition is skewed to basic and acidic residues over residues 16-26 and 62-71; these read VKQEERADDSH and LSEHVPEKKP. The C2H2-type 1 zinc finger occupies 42–65; sequence LKCELCSTVCSSISQLQSHTLSEH. The C2H2-type 2; degenerate zinc finger occupies 85–107; that stretch reads VACQQCEDTFEDFAQFAIHMKSH. A C2H2-type 3; degenerate zinc finger spans residues 204–226; that stretch reads YGCALCATSYPSQLHLITHVQMS. A disordered region spans residues 231-250; the sequence is TFYPPSLPIPTPPSPKSTPK. Residues 235–246 show a composition bias toward pro residues; it reads PSLPIPTPPSPK. C2H2-type zinc fingers lie at residues 254 to 277, 284 to 306, 312 to 334, and 355 to 377; these read LQCS…LRKH, DKCA…CLRH, HHCP…CAYH, and FVCP…TKIH.

It localises to the nucleus. This chain is Putative zinc finger protein C09F5.3, found in Caenorhabditis elegans.